The chain runs to 160 residues: MKCSVLQMSRLSWAMCLMLLMLLLLGTAQGCFIRNCPRGGKRAVDALQPTRQCMSCGPDGVGQCVGPSVCCGLGLGCLMGTPETEVCQKENESSVPCAISGRHCGMDNTGNCVADGICCVEDACSFNSLCRVDTDQEDSVSARQELLTLIRRLLVNRQYD.

The first 30 residues, 1 to 30, serve as a signal peptide directing secretion; it reads MKCSVLQMSRLSWAMCLMLLMLLLLGTAQG. The cysteines at positions 31 and 36 are disulfide-linked. G39 is subject to Glycine amide. Positions 40–47 are excised as a propeptide; that stretch reads GKRAVDAL. 7 cysteine pairs are disulfide-bonded: C53-C97, C56-C70, C64-C87, C71-C77, C104-C118, C112-C130, and C119-C124.

It belongs to the vasopressin/oxytocin family. As to expression, expressed by the venom gland.

It is found in the secreted. Functionally, targets vasopressin-oxytocin related receptors. The polypeptide is Conopressin/conophysin, isoform 2 (Conus monile (Necklace cone)).